Reading from the N-terminus, the 498-residue chain is Cytochrome P450 monooxygenase 71 (498 aa).

Residues 7–24 form a helical membrane-spanning segment; the sequence is YVFALLGILATLYFVRWS. N425 carries N-linked (GlcNAc...) asparagine glycosylation. Residue C440 participates in heme binding.

Belongs to the cytochrome P450 family. Heme is required as a cofactor.

The protein resides in the membrane. Its pathway is secondary metabolite biosynthesis. In terms of biological role, cytochrome P450 monooxygenase that is able to use dehydroabietic acid and testosterone as substrates for oxidation, suggesting that the natural substrate(s) may be structurally related to steroid compounds. This chain is Cytochrome P450 monooxygenase 71, found in Postia placenta (strain ATCC 44394 / Madison 698-R) (Brown rot fungus).